We begin with the raw amino-acid sequence, 116 residues long: Large ribosomal subunit protein uL18 (116 aa).

The protein belongs to the universal ribosomal protein uL18 family. In terms of assembly, part of the 50S ribosomal subunit; part of the 5S rRNA/L5/L18/L25 subcomplex. Contacts the 5S and 23S rRNAs.

Functionally, this is one of the proteins that bind and probably mediate the attachment of the 5S RNA into the large ribosomal subunit, where it forms part of the central protuberance. This Pseudomonas entomophila (strain L48) protein is Large ribosomal subunit protein uL18.